A 411-amino-acid polypeptide reads, in one-letter code: Probable peptidoglycan glycosyltransferase FtsW (411 aa).

The Cytoplasmic portion of the chain corresponds to 1–40 (MLERMLPFLGRKRDKAAADLPVRVGHSAPRNSRMLEYDQN). A helical transmembrane segment spans residues 41–61 (LVWVTLLLLAYGLVMVYSATI). Topologically, residues 62 to 81 (SFHDSPRYAQWSPYHYFIRD) are periplasmic. The helical transmembrane segment at 82–102 (LFSIAAALLASWIVVQIPMAE) threads the bilayer. Residues 103-109 (LQKWSMR) lie on the Cytoplasmic side of the membrane. A helical transmembrane segment spans residues 110–130 (FFFLSLIGLVLVLLPHIGKDV). Topologically, residues 131–136 (NGSKRW) are periplasmic. A helical membrane pass occupies residues 137–157 (VVFPGGLNFQPSELVKLTALI). Residues 158–172 (YAADFMVRKQEVKQS) lie on the Cytoplasmic side of the membrane. The chain crosses the membrane as a helical span at residues 173–193 (LLKTFLPMMAVMMIVGVLLLA). The Periplasmic portion of the chain corresponds to 194-196 (EPD). The chain crosses the membrane as a helical span at residues 197-217 (MGAFLVIASITLAILFLGGAN). Over 218 to 219 (GK) the chain is Cytoplasmic. The helical transmembrane segment at 220 to 240 (LFSVFSVAVIGAFVLMIVLSP) threads the bilayer. Residues 241-298 (WRRDRIFAYLNPWSESNALGSAYQLSHALIAMGRGEWFGVGLGGSIEKLHYLPEAHTD) are Periplasmic-facing. Residues 299 to 319 (FLLAIIGEELGLVGVGVVIFA) traverse the membrane as a helical segment. Over 320 to 347 (FYWIVRRAFDIGRQALVLDRMYSALVAQ) the chain is Cytoplasmic. Residues 348–368 (GIGVWIGGQAFINIGVNLGLL) form a helical membrane-spanning segment. The Periplasmic portion of the chain corresponds to 369 to 374 (PTKGLT). A helical transmembrane segment spans residues 375-395 (LPLMSYGGSALLLNCMAIAVL). Residues 396–411 (LRVDFENRILMRGGHV) are Cytoplasmic-facing.

This sequence belongs to the SEDS family. FtsW subfamily.

The protein resides in the cell inner membrane. The enzyme catalyses [GlcNAc-(1-&gt;4)-Mur2Ac(oyl-L-Ala-gamma-D-Glu-L-Lys-D-Ala-D-Ala)](n)-di-trans,octa-cis-undecaprenyl diphosphate + beta-D-GlcNAc-(1-&gt;4)-Mur2Ac(oyl-L-Ala-gamma-D-Glu-L-Lys-D-Ala-D-Ala)-di-trans,octa-cis-undecaprenyl diphosphate = [GlcNAc-(1-&gt;4)-Mur2Ac(oyl-L-Ala-gamma-D-Glu-L-Lys-D-Ala-D-Ala)](n+1)-di-trans,octa-cis-undecaprenyl diphosphate + di-trans,octa-cis-undecaprenyl diphosphate + H(+). It functions in the pathway cell wall biogenesis; peptidoglycan biosynthesis. Peptidoglycan polymerase that is essential for cell division. This Thiomonas intermedia (strain K12) (Thiobacillus intermedius) protein is Probable peptidoglycan glycosyltransferase FtsW.